The primary structure comprises 218 residues: Large ribosomal subunit protein uL2c (218 aa).

The segment at glycine 165–proline 192 is disordered.

This sequence belongs to the universal ribosomal protein uL2 family. In terms of assembly, part of the 50S ribosomal subunit.

It is found in the plastid. The protein localises to the chloroplast. In Bigelowiella natans (Pedinomonas minutissima), this protein is Large ribosomal subunit protein uL2c (rpl2).